Here is a 265-residue protein sequence, read N- to C-terminus: MDLQTFRKQIEKKLQRDGWTIRYDHKESTLRIEDKATKKGATLALKPLLAKWEREEYAAVDEALRTVAVGLESMAKAVHLNGNEKNIFPVIRAASFPDKTKDGKTLVYQKHTAETRIYYAVDLGETYTLITDELLNESGWELKALAEMATFNVRSLPQPFKEDEVAGNRFYFLSANDGYDASRILDQSLVQRMEQKAVGQLVAAIPHQDALIFADIENDTGYDVLGQMALQFFGGGRIPVTALPFIVENGQLEPVFIMAQKKPKG.

Belongs to the UPF0354 family.

The chain is UPF0354 protein ABC2771 from Shouchella clausii (strain KSM-K16) (Alkalihalobacillus clausii).